The following is a 697-amino-acid chain: Mediator of RNA polymerase II transcription subunit 16 (697 aa).

WD repeat units follow at residues 68 to 107 (GHQE…ANSW), 199 to 241 (RCRV…VSEK), 264 to 308 (DKFP…LPLN), and 622 to 663 (NQGS…CLPV).

It belongs to the Mediator complex subunit 16 family. Component of the Mediator complex.

Its subcellular location is the nucleus. Functionally, component of the Mediator complex, a coactivator involved in the regulated transcription of nearly all RNA polymerase II-dependent genes. Mediator functions as a bridge to convey information from gene-specific regulatory proteins to the basal RNA polymerase II transcription machinery. Mediator is recruited to promoters by direct interactions with regulatory proteins and serves as a scaffold for the assembly of a functional preinitiation complex with RNA polymerase II and the general transcription factors. The polypeptide is Mediator of RNA polymerase II transcription subunit 16 (med16) (Xenopus laevis (African clawed frog)).